The following is a 267-amino-acid chain: MSQHNILEALNVRVVGTGDRILFLAHGFGTDQSAWHLILPYFTQNYRVVLYDLVCAGSVNPDYFDFNRYTTLDPYVDDLLNIVDSLGIQNCAYVGHSVSAMIGIIASIRRPELFSKLILIGFSPRFLNDEDYHGGFEEGEIEKVFSAMEANYEAWVHGFAPLAVGADVPAAVREFSRTLFNMRPDISLFVSRTVFNSDLRGVLGLVRVPTCVIQTAKDVSVPASVAEYLRSHLGGDTTVETLKTEGHLPQLSAPAQLAQFLRRALPR.

S97 serves as the catalytic Nucleophile. Active-site residues include D218 and H247.

The protein belongs to the AB hydrolase superfamily. Interacts with SMXL6, SMXL7 and SMXL8. The interaction with SMXLs occurs in the presence of (2'R) stereoisomers of strigolactones, but not (2'S) stereoisomers. Interacts with MAX2. Forms a complex with MAX2 and SKP1A/ASK1 in presence of strigolactone. In terms of tissue distribution, expressed at high levels in rosette and cauline leaves and at lower levels in axillary buds, inflorescences, stems, roots and developing vascular tissue of cotyledons.

It localises to the cytoplasm. Its subcellular location is the nucleus. Involved in strigolactone signaling pathway. Does not move long distances acropetally in the plant to regulate shoot branching and is rapidly degraded in the presence of strigolactones. Functions downstream of strigolactone synthesis, as a component of hormone signaling and as an enzyme that participates in the conversion of strigolactones to the bioactive form. Acts probably as a strigolactone receptor. Strigolactones are hormones that inhibit tillering and shoot branching through the MAX-dependent pathway, contribute to the regulation of shoot architectural response to phosphate-limiting conditions and function as rhizosphere signal that stimulates hyphal branching of arbuscular mycorrhizal fungi and trigger seed germination of root parasitic weeds. Hydrolyzes methyl carlactonoate (MeCLA), but not carlactone (CL) or carlactonoic acid (CLA). Hydrolyzes the butenolide ring of strigolactones. The initial nucleophilic attack causes an electron shift, followed by the addition of a water molecule, to lead to the release of the ABC ring product and the formation of a 'Ser-97'-stabilized open lactone intermediate. Has no esterase activity for 4-nitrophenyl butyrate. Binds and hydrolyzes the synthetic strigolactone analog GR24 in vitro. Forms a stable covalent complex with the D-ring of strigolactone, which is essential for hormone bioactivity. The D-ring is attached to His-247 of the catalytic triad. The hydrolysis of strigolactone into a covalently linked intermediate molecule initiates a conformational change of D14 to facilitate interaction with MAX2 and formation of the D14-MAX2-SKP1/ASK1 complex to trigger strigolactone signaling. This mechanism defines D14 as a non-canonical hormone receptor with dual functions to generate and sense the active form of strigolactone. This Arabidopsis thaliana (Mouse-ear cress) protein is Strigolactone esterase D14.